The sequence spans 323 residues: Sphingolipid delta(4)-desaturase DES1 (323 aa).

Helical transmembrane passes span 41–61 (HNLI…FYLV) and 68–88 (WLLF…TLAI). The Histidine box-1 motif lies at 89–93 (HEISH). A helical transmembrane segment spans residues 104–124 (WNRCFGMFANLPLGLPYSVSF). Residues 128 to 132 (HMDHH) carry the Histidine box-2 motif. 3 consecutive transmembrane segments (helical) span residues 152-172 (FFCT…FYTI), 185-205 (LEII…YTLG), and 210-230 (FYML…GHFI). The Histidine box-3 motif lies at 259–263 (HNEHH).

Belongs to the fatty acid desaturase type 1 family. DEGS subfamily. In terms of assembly, interacts with RLBP1; the interaction increases synthesis of chromophore-precursors by DEGS1.

The protein localises to the endoplasmic reticulum membrane. The enzyme catalyses an N-acylsphinganine + 2 Fe(II)-[cytochrome b5] + O2 + 2 H(+) = an N-acylsphing-4-enine + 2 Fe(III)-[cytochrome b5] + 2 H2O. It carries out the reaction all-trans-retinol = 11-cis-retinol. It catalyses the reaction all-trans-retinol = 9-cis-retinol. The catalysed reaction is all-trans-retinol = 13-cis-retinol. The enzyme catalyses 11-cis-retinol = 13-cis-retinol. It carries out the reaction 11-cis-retinol = 9-cis-retinol. Functionally, has sphingolipid-delta-4-desaturase activity. Converts D-erythro-sphinganine to D-erythro-sphingosine (E-sphing-4-enine). Catalyzes the equilibrium isomerization of retinols. The protein is Sphingolipid delta(4)-desaturase DES1 (degs1) of Xenopus tropicalis (Western clawed frog).